The following is a 301-amino-acid chain: MNSINFLSIVGLISFGFIVAVKCDGDEYFIGKYKEKDETLFFASYGLKRDPCQIVLGYKCSNNQTHFVLNFKTNKKSCISAIKLTSYPKINQNSDLTKNLYCQTGGIGTDNCKLVFKKRKRQIAANIEIYGIPAKKCSFKDRYIGADPLHVDSYGLPYQFDQEHGWNVERYNIFKDTRFSTEVFYHKNGLFNTQITYLAEEDSFSEAREITAKDIKKKFSIILPNEEYKRISFLDVYWFQETMRKKPKYPYIHYNGECSNENKTCELVFDTDELMTYALVKVFTNPESDGSRLKEEDLGRG.

The first 23 residues, 1-23 (MNSINFLSIVGLISFGFIVAVKC), serve as a signal peptide directing secretion. 4 cysteine pairs are disulfide-bonded: C52–C60, C78–C137, C102–C112, and C258–C265. An N-linked (GlcNAc...) asparagine glycan is attached at N262.

As to quaternary structure, interacts with factor Xa. Associates with complement proconvertase C3b-B complex. In terms of tissue distribution, expressed in salivary glands.

It localises to the secreted. Its function is as follows. Sand fly salivary protein with antithrombotic, and anti-complement (alternative pathway) activities. Is a slow, tight, non-competitive, and reversible inhibitor of factor Xa (FXa, F10). Is specific for FXa (Kd=3.86 nM) and does not interact with non-activated FX, or all other enzymes tested. In addition, it blocks prothrombinase and increases both prothrombin time and activated partial thromboplastin time. It also prevents protease-activated receptor 2 (F2RL1, PAR2) activation by FXa. In vivo, it abrogates edema formation triggered by injection of FXa in the paw of mice. Moreover, it prevents FeCl(3)-induced carotid artery thrombus formation and prolongs activated partial thromboplastin time ex vivo, implying that it works as an anticoagulant in vivo. It also inhibits the early steps of the alternative pathway of complement by direct binding to the proconvertase C3b-B complex, by inhibiting activation of factor B and consequently the formation of the C3 convertase. In Lutzomyia longipalpis (Sand fly), this protein is Lufaxin.